Consider the following 1041-residue polypeptide: Putative transcription elongation factor SPT5 homolog 1 (1041 aa).

The tract at residues Met1–Arg133 is disordered. Composition is skewed to acidic residues over residues Glu7–Glu32, Asp53–Tyr69, and Asp99–Ile114. At Ser59 the chain carries Phosphoserine. The segment covering Pro122–Arg133 has biased composition (basic and acidic residues). KOW domains lie at Asp273–Val300, His425–Glu452, Tyr477–His504, and Val601–Gly628. 2 disordered regions span residues Asn662–Ser713 and Asp768–Leu921. A compositionally biased stretch (gly residues) spans Gly691 to His703. Residues Asp712 to Asn739 form the KOW 5 domain. Basic and acidic residues predominate over residues Asp804–Ala814. Polar residues-rich tracts occupy residues Ser835–Pro844 and Thr893–Ser904. One can recognise a KOW 6 domain in the interval Pro988–Ser1015.

Belongs to the SPT5 family.

The protein resides in the nucleus. Functionally, may regulate transcription elongation by RNA polymerase II. May enhance transcriptional pausing at sites proximal to the promoter, which may in turn facilitate the assembly of an elongation competent RNA polymerase II complex. The sequence is that of Putative transcription elongation factor SPT5 homolog 1 from Arabidopsis thaliana (Mouse-ear cress).